Here is a 341-residue protein sequence, read N- to C-terminus: KH domain-containing RNA-binding protein qki.S (341 aa).

A KH domain is found at Tyr-88 to Val-154. The Nuclear localization signal signature appears at Arg-324–Arg-330.

This sequence belongs to the quaking family. In terms of assembly, homodimer; does not require RNA to homodimerize.

It localises to the nucleus. It is found in the cytoplasm. RNA reader protein, which recognizes and binds specific RNAs, thereby regulating RNA metabolic processes, such as pre-mRNA splicing, circular RNA (circRNA) formation, mRNA export, mRNA stability and/or translation. Involved in various cellular processes, such as mRNA storage into stress granules, apoptosis, interferon response, glial cell fate and development. Binds to the 5'-NACUAAY-N(1,20)-UAAY-3' RNA core sequence. Acts as a mRNA modification reader that specifically recognizes and binds mRNA transcripts modified by internal N(7)-methylguanine (m7G). Promotes the formation of circular RNAs (circRNAs): acts by binding to sites flanking circRNA-forming exons. CircRNAs are produced by back-splicing circularization of pre-mRNAs. Required to protect and promote stability of mRNAs which promotes oligodendrocyte differentiation. Acts as an important regulator of muscle development. Essential for notochord development. This chain is KH domain-containing RNA-binding protein qki.S, found in Xenopus laevis (African clawed frog).